Here is a 100-residue protein sequence, read N- to C-terminus: Urease subunit gamma (100 aa).

This sequence belongs to the urease gamma subunit family. As to quaternary structure, heterotrimer of UreA (gamma), UreB (beta) and UreC (alpha) subunits. Three heterotrimers associate to form the active enzyme.

The protein resides in the cytoplasm. The enzyme catalyses urea + 2 H2O + H(+) = hydrogencarbonate + 2 NH4(+). The protein operates within nitrogen metabolism; urea degradation; CO(2) and NH(3) from urea (urease route): step 1/1. This Mycolicibacterium vanbaalenii (strain DSM 7251 / JCM 13017 / BCRC 16820 / KCTC 9966 / NRRL B-24157 / PYR-1) (Mycobacterium vanbaalenii) protein is Urease subunit gamma.